Consider the following 150-residue polypeptide: Arginine repressor (150 aa).

This sequence belongs to the ArgR family.

It localises to the cytoplasm. It functions in the pathway amino-acid biosynthesis; L-arginine biosynthesis [regulation]. Functionally, regulates arginine biosynthesis genes. The chain is Arginine repressor from Symbiobacterium thermophilum (strain DSM 24528 / JCM 14929 / IAM 14863 / T).